Here is a 73-residue protein sequence, read N- to C-terminus: Putative defensin-like protein 270 (73 aa).

Positions 1–23 are cleaved as a signal peptide; that stretch reads MMSSKSHFVALLLIIFLIVNVQS. Disulfide bonds link Cys33-Cys72, Cys39-Cys60, Cys45-Cys70, and Cys49-Cys71.

It belongs to the DEFL family.

It is found in the secreted. In Arabidopsis thaliana (Mouse-ear cress), this protein is Putative defensin-like protein 270.